Here is a 237-residue protein sequence, read N- to C-terminus: Uridylate kinase (237 aa).

Position 10 to 13 (10 to 13 (KLSG)) interacts with ATP. Gly-52 is a binding site for UMP. ATP is bound by residues Gly-53 and Arg-57. UMP contacts are provided by residues Asp-72 and 133–140 (TGNPFFTT). ATP-binding residues include Thr-160, Tyr-166, and Asp-169.

This sequence belongs to the UMP kinase family. Homohexamer.

It is found in the cytoplasm. It carries out the reaction UMP + ATP = UDP + ADP. It functions in the pathway pyrimidine metabolism; CTP biosynthesis via de novo pathway; UDP from UMP (UMPK route): step 1/1. Its activity is regulated as follows. Inhibited by UTP. Its function is as follows. Catalyzes the reversible phosphorylation of UMP to UDP. This Thiobacillus denitrificans (strain ATCC 25259 / T1) protein is Uridylate kinase.